Reading from the N-terminus, the 214-residue chain is Cytochrome c biogenesis ATP-binding export protein CcmA (214 aa).

Residues 12-214 form the ABC transporter domain; the sequence is LAAHDLAFSR…TRMLTLEVAA (203 aa). 44 to 51 is a binding site for ATP; that stretch reads GDNGAGKT.

The protein belongs to the ABC transporter superfamily. CcmA exporter (TC 3.A.1.107) family. As to quaternary structure, the complex is composed of two ATP-binding proteins (CcmA) and two transmembrane proteins (CcmB).

It is found in the cell inner membrane. The enzyme catalyses heme b(in) + ATP + H2O = heme b(out) + ADP + phosphate + H(+). Part of the ABC transporter complex CcmAB involved in the biogenesis of c-type cytochromes; once thought to export heme, this seems not to be the case, but its exact role is uncertain. Responsible for energy coupling to the transport system. This Xanthomonas axonopodis pv. citri (strain 306) protein is Cytochrome c biogenesis ATP-binding export protein CcmA.